The following is a 1112-amino-acid chain: MPDFRYADALPEVRMSNALTTPNYLLPDLVEIQRESFRWFLEEGLIEELLSFSPITDYTGKMELHFLQDYKLKEPKYSVEEAKRRDSTYSVQMYVSTRLVNKETGEIKEQQVFIGELPLMTDRGTFIINGAERVIVNQIVRSPGVYYKQELDTNGRKTFNASLIPNRGAWLKFETDANDLVWVRIDKTRKLSAVVLLKALGLSDNEILDAFRHPEYFQKTIEKEGNYSEEEALLELYRKLRPGEPPTVSGGQQLLETRFFDPKRYDLGRVGRYKLNKKLRLSVPETTRILTPQDILASIDYLINLEFDIGSPDDIDHLGNRRVRSVGELLQNQVRVGLNRLERIIRERMTVSEAETLTPASLVNPKPLVAAIKEFFGSSQLSQFMDQTNPLAELTHKRRLSALGPGGLTRERAGFAVRDIHPSHYGRICPIETPEGPNAGLIGSLATHARVNSYGFIETPYKVVKDGRLSGEIKYLTADEEDEFRVAAGDVAVDEGGNILANPVTIRYRQEFGLASPAEVDYVAVSPIQIVSVATSLIPFLEHDDANRALMGANMQRQAVPLLRPERPLVGTGLEGQAARDSGMVIVSDIDGAITYVSGEQIRVRGENGQEFAYPLQKYQRSNQDTCLSQRPIVNVGDQVRNGQILADGSATEGGELALGQNILVAFMPWEGYNYEDAILISERLVYDDVFTSIHVEKFEIEARQTKLGPEEITREIPNVGEDSLRNLDERGIVRIGAWMEAGDILVGKVTPKGESDQPPEEKLLRAIFGEKARDVRDNSLRVPNGEKGRVVDVRVFTREQGDELPPGANMVVRVYLAQKRKVQVGDKVAGRHGNKGIISKILPKEDMPYLPDGRPVDIVLNPLGVPSRMNVGQVFETLLGWAGACLNVRFKVTPFDEMYIKEASRYLVHEKLMEAREVTGDPWVYSDTGKHIGKIQVYDGRTGEAFDRPVTVGQIYMMKLVHLVDDKIHARSTGPYSLVTQQPLGGKAQQGGQRFGEMEVWALEAFGAAYTLQELLTVKSDDMTGRNEALNAIVKGKAIPRPGIPESFKVLVRELQSLGLDVSVHKIETQHDGSSRDVEVDLMADVGGRRTPNRPTYENIGGPREMEFSED.

Residues valine 1087–aspartate 1112 form a disordered region.

This sequence belongs to the RNA polymerase beta chain family. As to quaternary structure, in cyanobacteria the RNAP catalytic core is composed of 2 alpha, 1 beta, 1 beta', 1 gamma and 1 omega subunit. When a sigma factor is associated with the core the holoenzyme is formed, which can initiate transcription.

The catalysed reaction is RNA(n) + a ribonucleoside 5'-triphosphate = RNA(n+1) + diphosphate. Its function is as follows. DNA-dependent RNA polymerase catalyzes the transcription of DNA into RNA using the four ribonucleoside triphosphates as substrates. This is DNA-directed RNA polymerase subunit beta from Gloeobacter violaceus (strain ATCC 29082 / PCC 7421).